A 277-amino-acid polypeptide reads, in one-letter code: Tryptophan synthase alpha chain (277 aa).

Catalysis depends on proton acceptor residues glutamate 59 and aspartate 70.

It belongs to the TrpA family. In terms of assembly, tetramer of two alpha and two beta chains.

The enzyme catalyses (1S,2R)-1-C-(indol-3-yl)glycerol 3-phosphate + L-serine = D-glyceraldehyde 3-phosphate + L-tryptophan + H2O. The protein operates within amino-acid biosynthesis; L-tryptophan biosynthesis; L-tryptophan from chorismate: step 5/5. Functionally, the alpha subunit is responsible for the aldol cleavage of indoleglycerol phosphate to indole and glyceraldehyde 3-phosphate. The polypeptide is Tryptophan synthase alpha chain (Streptomyces avermitilis (strain ATCC 31267 / DSM 46492 / JCM 5070 / NBRC 14893 / NCIMB 12804 / NRRL 8165 / MA-4680)).